The primary structure comprises 1442 residues: Death-associated protein kinase 1 (1442 aa).

One can recognise a Protein kinase domain in the interval 13–275; the sequence is YDTGEELGSG…IQDSLQHPWI (263 aa). ATP contacts are provided by residues 19-27 and Lys42; that span reads LGSGQFAVV. The active-site Proton acceptor is Asp139. Residues 267-334 form a calmodulin-binding region; it reads QDSLQHPWIK…RSNMSVARSD (68 aa). Residue Ser289 is modified to Phosphoserine; by RPS6KA1 and RPS6KA3. The tract at residues 292-301 is autoinhibitory domain; it reads NMEKFKKFAA. Ser308 is modified (phosphoserine; by autocatalysis). Phosphoserine is present on residues Ser319 and Ser333. ANK repeat units follow at residues 378 to 407, 411 to 440, 444 to 473, 477 to 506, 510 to 539, 543 to 572, 576 to 605, and 609 to 638; these read HGTP…RIDV, GGSN…PLDV, SGET…NPDF, EEET…NVNI, EGET…DLNA, DGHI…FVDF, HGNT…NLDI, and YGRT…NVEA. The Roc domain maps to 681 to 955; that stretch reads TQNLQPRIKL…NHLQEIRSQI (275 aa). Ser734 bears the Phosphoserine; by MAPK1 mark. One copy of the ANK 9 repeat lies at 875–904; it reads KLKNPLRVVLVATHADIMNIPRPAGGEFGY. At Ser1115 the chain carries Phosphoserine. The ANK 10 repeat unit spans residues 1164–1196; the sequence is DADIRLWVSGCRIANRGAELLVLLVNHGQGIEV. The Death domain occupies 1312-1396; that stretch reads KLSRLLDPPD…DAADFLLKAS (85 aa). Ser1433 is subject to Phosphoserine.

The protein belongs to the protein kinase superfamily. CAMK Ser/Thr protein kinase family. DAP kinase subfamily. As to quaternary structure, interacts with KLHL20. Interacts (via death domain) with MAPK1 and MAPK3. Interacts with MAP1B (via N-terminus). Interacts with PRKD1 in an oxidative stress-regulated manner. Interacts with PIN1, PDCD6, BECN1, TSC2 and STX1A. Interacts (via kinase domain) with DAPK3 (via kinase domain). Interacts with GRINB. Interacts (via death domain) with UNC5B (via death domain). Interacts with UNC5C (via death domain). Requires Mg(2+) as cofactor. Ubiquitinated by the BCR(KLHL20) E3 ubiquitin ligase complex, leading to its degradation by the proteasome. In terms of processing, in response to mitogenic stimulation (PMA or EGF), phosphorylated at Ser-289; phosphorylation suppresses DAPK1 pro-apoptotic function. Autophosphorylation at Ser-308 inhibits its catalytic activity. Phosphorylation at Ser-734 by MAPK1 increases its catalytic activity and promotes cytoplasmic retention of MAPK1. Endoplasmic-stress can cause dephosphorylation at Ser-308. High levels in bladder, uterus, vas deferens, lung, liver and kidney.

It carries out the reaction L-seryl-[protein] + ATP = O-phospho-L-seryl-[protein] + ADP + H(+). The catalysed reaction is L-threonyl-[protein] + ATP = O-phospho-L-threonyl-[protein] + ADP + H(+). Its activity is regulated as follows. Activated by Ca(2+)/calmodulin. Regulated by a locking mechanism, involving autophosphorylation at Ser-308 and calmodulin binding. In the inactive state, Ser-308 is phosphorylated. Activation involves its dephosphorylation and a release-of-autoinhibition mechanism where binding of calmodulin induces a conformational change that relieves the steric block of the active site by the autoinhibitory domain. Activity is modulated by UNC5B and NTN1. UNC5B activates it by inhibiting the phosphorylation at Ser-308, whereas NTN1 inhibits UNC5B-mediated activation of DAPK1. Endoplasmic-stress activates by causing Ser-308 dephosphorylation. Calcium/calmodulin-dependent serine/threonine kinase involved in multiple cellular signaling pathways that trigger cell survival, apoptosis, and autophagy. Regulates both type I apoptotic and type II autophagic cell deaths signal, depending on the cellular setting. The former is caspase-dependent, while the latter is caspase-independent and is characterized by the accumulation of autophagic vesicles. Phosphorylates PIN1 resulting in inhibition of its catalytic activity, nuclear localization, and cellular function. Phosphorylates TPM1, enhancing stress fiber formation in endothelial cells. Phosphorylates STX1A and significantly decreases its binding to STXBP1. Phosphorylates PRKD1 and regulates JNK signaling by binding and activating PRKD1 under oxidative stress. Phosphorylates BECN1, reducing its interaction with BCL2 and BCL2L1 and promoting the induction of autophagy. Phosphorylates TSC2, disrupting the TSC1-TSC2 complex and stimulating mTORC1 activity in a growth factor-dependent pathway. Phosphorylates RPS6, MYL9 and DAPK3. Acts as a signaling amplifier of NMDA receptors at extrasynaptic sites for mediating brain damage in stroke. Cerebral ischemia recruits DAPK1 into the NMDA receptor complex and it phosphorylates GRINB at Ser-1303 inducing injurious Ca(2+) influx through NMDA receptor channels, resulting in an irreversible neuronal death. Required together with DAPK3 for phosphorylation of RPL13A upon interferon-gamma activation which is causing RPL13A involvement in transcript-selective translation inhibition. This Mus musculus (Mouse) protein is Death-associated protein kinase 1 (Dapk1).